Reading from the N-terminus, the 771-residue chain is Probable exo-1,4-beta-xylosidase xlnD (771 aa).

Positions 1 to 25 (MARIMSWHYGKAITLFVCLGPVALS) are cleaved as a signal peptide. Residue Asn67 is glycosylated (N-linked (GlcNAc...) asparagine). Asp293 is a catalytic residue. 4 N-linked (GlcNAc...) asparagine glycosylation sites follow: Asn305, Asn345, Asn423, and Asn464.

It belongs to the glycosyl hydrolase 3 family.

The protein resides in the secreted. The enzyme catalyses Hydrolysis of (1-&gt;4)-beta-D-xylans, to remove successive D-xylose residues from the non-reducing termini.. It participates in glycan degradation; xylan degradation. Functionally, xylan 1,4-beta-xylosidase involved in the hydrolysis of xylan, a major structural heterogeneous polysaccharide found in plant biomass representing the second most abundant polysaccharide in the biosphere, after cellulose. This is Probable exo-1,4-beta-xylosidase xlnD (xlnD) from Neosartorya fischeri (strain ATCC 1020 / DSM 3700 / CBS 544.65 / FGSC A1164 / JCM 1740 / NRRL 181 / WB 181) (Aspergillus fischerianus).